Reading from the N-terminus, the 20-residue chain is Probable cinnamyl alcohol dehydrogenase 1 (20 aa).

It belongs to the zinc-containing alcohol dehydrogenase family. The cofactor is Zn(2+).

The catalysed reaction is (E)-cinnamyl alcohol + NADP(+) = (E)-cinnamaldehyde + NADPH + H(+). The enzyme catalyses (E)-coniferol + NADP(+) = (E)-coniferaldehyde + NADPH + H(+). It catalyses the reaction (E)-sinapyl alcohol + NADP(+) = (E)-sinapaldehyde + NADPH + H(+). It carries out the reaction (E)-4-coumaroyl alcohol + NADP(+) = (E)-4-coumaraldehyde + NADPH + H(+). The catalysed reaction is (E)-caffeyl alcohol + NADP(+) = (E)-caffeyl aldehyde + NADPH + H(+). It functions in the pathway aromatic compound metabolism; phenylpropanoid biosynthesis. Its function is as follows. Involved in lignin biosynthesis. Catalyzes the final step specific for the production of lignin monomers, like coniferyl alcohol, sinapyl alcohol and 4-coumaryl alcohol. The sequence is that of Probable cinnamyl alcohol dehydrogenase 1 from Pseudotsuga menziesii (Douglas-fir).